The following is a 553-amino-acid chain: Probable malate:quinone oxidoreductase (553 aa).

Residues 524–553 (PPPKIDVNTPSQATGTAPARPAKASADMAL) form a disordered region.

It belongs to the MQO family. Requires FAD as cofactor.

It carries out the reaction (S)-malate + a quinone = a quinol + oxaloacetate. Its pathway is carbohydrate metabolism; tricarboxylic acid cycle; oxaloacetate from (S)-malate (quinone route): step 1/1. The sequence is that of Probable malate:quinone oxidoreductase from Burkholderia lata (strain ATCC 17760 / DSM 23089 / LMG 22485 / NCIMB 9086 / R18194 / 383).